Reading from the N-terminus, the 229-residue chain is Peptidase E (229 aa).

Active-site charge relay system residues include Ser-120, Asp-135, and His-157.

The protein belongs to the peptidase S51 family.

It localises to the cytoplasm. It carries out the reaction Dipeptidase E catalyzes the hydrolysis of dipeptides Asp-|-Xaa. It does not act on peptides with N-terminal Glu, Asn or Gln, nor does it cleave isoaspartyl peptides.. Functionally, hydrolyzes dipeptides containing N-terminal aspartate residues. May play a role in allowing the cell to use peptide aspartate to spare carbon otherwise required for the synthesis of the aspartate family of amino acids. The protein is Peptidase E of Salmonella typhi.